The chain runs to 204 residues: Methylthioribulose-1-phosphate dehydratase (204 aa).

Zn(2+)-binding residues include histidine 95 and histidine 97.

The protein belongs to the aldolase class II family. MtnB subfamily. The cofactor is Zn(2+).

The catalysed reaction is 5-(methylsulfanyl)-D-ribulose 1-phosphate = 5-methylsulfanyl-2,3-dioxopentyl phosphate + H2O. It functions in the pathway amino-acid biosynthesis; L-methionine biosynthesis via salvage pathway; L-methionine from S-methyl-5-thio-alpha-D-ribose 1-phosphate: step 2/6. Its function is as follows. Catalyzes the dehydration of methylthioribulose-1-phosphate (MTRu-1-P) into 2,3-diketo-5-methylthiopentyl-1-phosphate (DK-MTP-1-P). This Parvibaculum lavamentivorans (strain DS-1 / DSM 13023 / NCIMB 13966) protein is Methylthioribulose-1-phosphate dehydratase.